The chain runs to 382 residues: Galactokinase (382 aa).

34-37 (EHTD) contributes to the substrate binding site. ATP is bound at residue 124 to 130 (GAGLSSS). Residues Ser130 and Glu162 each coordinate Mg(2+). Residue Asp174 is the Proton acceptor of the active site. Substrate is bound at residue Tyr223.

It belongs to the GHMP kinase family. GalK subfamily.

The protein resides in the cytoplasm. It carries out the reaction alpha-D-galactose + ATP = alpha-D-galactose 1-phosphate + ADP + H(+). It functions in the pathway carbohydrate metabolism; galactose metabolism. Its function is as follows. Catalyzes the transfer of the gamma-phosphate of ATP to D-galactose to form alpha-D-galactose-1-phosphate (Gal-1-P). This Escherichia fergusonii (strain ATCC 35469 / DSM 13698 / CCUG 18766 / IAM 14443 / JCM 21226 / LMG 7866 / NBRC 102419 / NCTC 12128 / CDC 0568-73) protein is Galactokinase.